The following is a 1337-amino-acid chain: Aldehyde oxidase 4 (1337 aa).

Residues 4–91 (DDLVFAVNGE…GCSITTSDGL (88 aa)) form the 2Fe-2S ferredoxin-type domain. [2Fe-2S] cluster contacts are provided by C43, C48, C51, C73, C113, C116, C155, and C157. The region spanning 225–409 (LDQTRYHWST…LKVHIPRWIA (185 aa)) is the FAD-binding PCMH-type domain. FAD is bound by residues 259 to 266 (LVVGNTGT), 342 to 346 (SIGGN), D358, and L399. Mo-molybdopterin contacts are provided by Q771, F802, and R915. Catalysis depends on E1265, which acts as the Proton acceptor.

Belongs to the xanthine dehydrogenase family. Aldehyde oxidases (AO) are homodimers and heterodimers of AO subunits. The cofactor is [2Fe-2S] cluster. It depends on FAD as a cofactor. Requires Mo-molybdopterin as cofactor. In terms of tissue distribution, transcripts expressed at high levels in developing siliques and at low levels in dry seeds.

Its subcellular location is the cytoplasm. The enzyme catalyses indole-3-acetaldehyde + O2 + H2O = (indol-3-yl)acetate + H2O2 + H(+). The catalysed reaction is an aldehyde + O2 + H2O = a carboxylate + H2O2 + H(+). It carries out the reaction benzaldehyde + O2 + H2O = benzoate + H2O2 + H(+). It catalyses the reaction hexanal + O2 + H2O = hexanoate + H2O2 + H(+). The enzyme catalyses 1-naphthaldehyde + O2 + H2O = 1-naphthoate + H2O2 + H(+). The catalysed reaction is vanillin + O2 + H2O = vanillate + H2O2 + H(+). It carries out the reaction malonaldehyde + O2 + H2O = 3-oxopropanoate + H2O2 + H(+). It catalyses the reaction citral + O2 + H2O = 3,7-dimethylocta-2,6-dienoate + H2O2 + H(+). The enzyme catalyses acrolein + O2 + H2O = acrylate + H2O2 + H(+). The catalysed reaction is (E)-4-hydroxynon-2-enal + O2 + H2O = (E)-4-hydroxynon-2-enoate + H2O2 + H(+). It carries out the reaction (E)-cinnamaldehyde + O2 + H2O = (E)-cinnamate + H2O2 + H(+). It catalyses the reaction indole-3-carbaldehyde + O2 + H2O = indole-3-carboxylate + H2O2 + H(+). The enzyme catalyses propanal + O2 + H2O = propanoate + H2O2 + H(+). The catalysed reaction is dodecanal + O2 + H2O = dodecanoate + H2O2 + H(+). It carries out the reaction salicylaldehyde + O2 + H2O = salicylate + H2O2 + H(+). Its activity is regulated as follows. Inhibited by Cu(2+). Functionally, aldehyde oxidase with a broad substrate specificity. Involved in the accumulation of benzoic acid (BA) in siliques. Delays and protects siliques from senescence by catalyzing aldehyde detoxification in siliques. Catalyzes the oxidation of an array of aromatic and aliphatic aldehydes, including vanillin and the reactive carbonyl species (RCS) acrolein, 4-hydroxyl-2-nonenal (HNE), and malondialdehyde (MDA). In Arabidopsis thaliana (Mouse-ear cress), this protein is Aldehyde oxidase 4.